The following is a 251-amino-acid chain: Imidazole glycerol phosphate synthase subunit HisF (251 aa).

Catalysis depends on residues Asp11 and Asp130.

The protein belongs to the HisA/HisF family. In terms of assembly, heterodimer of HisH and HisF.

Its subcellular location is the cytoplasm. The enzyme catalyses 5-[(5-phospho-1-deoxy-D-ribulos-1-ylimino)methylamino]-1-(5-phospho-beta-D-ribosyl)imidazole-4-carboxamide + L-glutamine = D-erythro-1-(imidazol-4-yl)glycerol 3-phosphate + 5-amino-1-(5-phospho-beta-D-ribosyl)imidazole-4-carboxamide + L-glutamate + H(+). The protein operates within amino-acid biosynthesis; L-histidine biosynthesis; L-histidine from 5-phospho-alpha-D-ribose 1-diphosphate: step 5/9. In terms of biological role, IGPS catalyzes the conversion of PRFAR and glutamine to IGP, AICAR and glutamate. The HisF subunit catalyzes the cyclization activity that produces IGP and AICAR from PRFAR using the ammonia provided by the HisH subunit. In Natranaerobius thermophilus (strain ATCC BAA-1301 / DSM 18059 / JW/NM-WN-LF), this protein is Imidazole glycerol phosphate synthase subunit HisF.